The following is a 174-amino-acid chain: Adenine phosphoribosyltransferase (174 aa).

This sequence belongs to the purine/pyrimidine phosphoribosyltransferase family. As to quaternary structure, homodimer.

Its subcellular location is the cytoplasm. It catalyses the reaction AMP + diphosphate = 5-phospho-alpha-D-ribose 1-diphosphate + adenine. It functions in the pathway purine metabolism; AMP biosynthesis via salvage pathway; AMP from adenine: step 1/1. Its function is as follows. Catalyzes a salvage reaction resulting in the formation of AMP, that is energically less costly than de novo synthesis. This Phocaeicola vulgatus (strain ATCC 8482 / DSM 1447 / JCM 5826 / CCUG 4940 / NBRC 14291 / NCTC 11154) (Bacteroides vulgatus) protein is Adenine phosphoribosyltransferase.